Here is a 146-residue protein sequence, read N- to C-terminus: Large ribosomal subunit protein bL17 (146 aa).

Residues 124-134 (EASRATRAAAS) show a composition bias toward low complexity. The segment at 124-146 (EASRATRAAASKKAEEEAASEAE) is disordered.

It belongs to the bacterial ribosomal protein bL17 family. In terms of assembly, part of the 50S ribosomal subunit. Contacts protein L32.

This chain is Large ribosomal subunit protein bL17, found in Corynebacterium kroppenstedtii (strain DSM 44385 / JCM 11950 / CIP 105744 / CCUG 35717).